A 431-amino-acid polypeptide reads, in one-letter code: Adenylosuccinate synthetase (431 aa).

Residues 12–18 and 40–42 each bind GTP; these read GDEGKGK and GHT. The Proton acceptor role is filled by Asp13. The Mg(2+) site is built by Asp13 and Gly40. Residues 13-16, 38-41, Thr129, Arg143, Gln224, Thr239, and Arg303 contribute to the IMP site; these read DEGK and NAGH. His41 serves as the catalytic Proton donor. Position 299–305 (299–305) interacts with substrate; that stretch reads VTTGRAR. Residues Arg305, 331–333, and 413–415 contribute to the GTP site; these read KLD and GVG.

The protein belongs to the adenylosuccinate synthetase family. Homodimer. The cofactor is Mg(2+).

It localises to the cytoplasm. It catalyses the reaction IMP + L-aspartate + GTP = N(6)-(1,2-dicarboxyethyl)-AMP + GDP + phosphate + 2 H(+). It participates in purine metabolism; AMP biosynthesis via de novo pathway; AMP from IMP: step 1/2. Plays an important role in the de novo pathway of purine nucleotide biosynthesis. Catalyzes the first committed step in the biosynthesis of AMP from IMP. The sequence is that of Adenylosuccinate synthetase from Mycolicibacterium vanbaalenii (strain DSM 7251 / JCM 13017 / BCRC 16820 / KCTC 9966 / NRRL B-24157 / PYR-1) (Mycobacterium vanbaalenii).